The following is a 198-amino-acid chain: Peroxynitrite isomerase (198 aa).

A GXWXGXG motif is present at residues 20–26; sequence GVWEGTG. Residue histidine 189 coordinates heme b.

It belongs to the nitrobindin family. Homodimer. It depends on heme b as a cofactor.

The enzyme catalyses peroxynitrite = nitrate. Its pathway is nitrogen metabolism. Heme-binding protein able to scavenge peroxynitrite and to protect free L-tyrosine against peroxynitrite-mediated nitration, by acting as a peroxynitrite isomerase that converts peroxynitrite to nitrate. Therefore, this protein likely plays a role in peroxynitrite sensing and in the detoxification of reactive nitrogen and oxygen species (RNS and ROS, respectively). Is able to bind nitric oxide (NO) in vitro, but may act as a sensor of peroxynitrite levels in vivo. The chain is Peroxynitrite isomerase from Leifsonia xyli subsp. xyli (strain CTCB07).